A 51-amino-acid chain; its full sequence is Large ribosomal subunit protein eL39 (51 aa).

It belongs to the eukaryotic ribosomal protein eL39 family.

This Saccharolobus islandicus (strain Y.N.15.51 / Yellowstone #2) (Sulfolobus islandicus) protein is Large ribosomal subunit protein eL39.